Here is a 402-residue protein sequence, read N- to C-terminus: MTGIIHSLLDTDLYKFTMLQVVLHQFPQTHSLYEFRCRNASTVYPLADIKEDLEVELDALCQLRFTHDELDYLRSLRFIKSDFVDYLELFQLQRRFVEVGTDDKGRLNIRIEGPMIQAMFFEIFILAIVNELYFRRLETPAVIEEGERRLQAKAARLKEIAAAQNPDEPPFLISDFGTRRRYKLAWQEHVIRTLLEAAPSIVRGTSNVFLAKKLGITPIGTMAHEFLQAFQALDVRLRNFQKAALESWVHEYRGDLGVALTDVVGMDAFLRDFDLYFAKLFDGLRHDSGDPYIWGDKAYAHYQKLKIDSRTKMLTFSDGLDIERSWALHQYFKDRFKTGFGIGTNLTNDMGHTPLNIVLKLVECNGQSVAKLSDSPGKTMTNNSTFLAYLRQVFDVPEPETP.

Residue His-224 is modified to Phosphohistidine; by autocatalysis.

Belongs to the NAPRTase family. Post-translationally, transiently phosphorylated on a His residue during the reaction cycle. Phosphorylation strongly increases the affinity for substrates and increases the rate of nicotinate D-ribonucleotide production. Dephosphorylation regenerates the low-affinity form of the enzyme, leading to product release.

It catalyses the reaction nicotinate + 5-phospho-alpha-D-ribose 1-diphosphate + ATP + H2O = nicotinate beta-D-ribonucleotide + ADP + phosphate + diphosphate. Its pathway is cofactor biosynthesis; NAD(+) biosynthesis; nicotinate D-ribonucleotide from nicotinate: step 1/1. Catalyzes the synthesis of beta-nicotinate D-ribonucleotide from nicotinate and 5-phospho-D-ribose 1-phosphate at the expense of ATP. This chain is Nicotinate phosphoribosyltransferase, found in Neisseria meningitidis serogroup A / serotype 4A (strain DSM 15465 / Z2491).